The sequence spans 160 residues: MTKEVVVESFELDHTIVKAPYVRLISEEVGPVGDIITNFDIRLIQPNENAIDTAGLHTIEHLLAKLIRQRINGLIDCSPFGCRTGFHMIMWGKQDATEIAKVIKSSLEAIAGGVTWEDVPGTTIESCGNYKDHSLHSAQEWAKLILSQGISDNAFERHIV.

3 residues coordinate Fe cation: His57, His61, and Cys127.

Belongs to the LuxS family. In terms of assembly, homodimer. It depends on Fe cation as a cofactor.

The enzyme catalyses S-(5-deoxy-D-ribos-5-yl)-L-homocysteine = (S)-4,5-dihydroxypentane-2,3-dione + L-homocysteine. Functionally, involved in the synthesis of autoinducer 2 (AI-2) which is secreted by bacteria and is used to communicate both the cell density and the metabolic potential of the environment. The regulation of gene expression in response to changes in cell density is called quorum sensing. Catalyzes the transformation of S-ribosylhomocysteine (RHC) to homocysteine (HC) and 4,5-dihydroxy-2,3-pentadione (DPD). This Streptococcus agalactiae serotype V (strain ATCC BAA-611 / 2603 V/R) protein is S-ribosylhomocysteine lyase.